The following is a 392-amino-acid chain: Probable glycerol-3-phosphate dehydrogenase 2 (392 aa).

Residues 42–47 (GSGNWG), Phe-130, Lys-153, and Ala-196 each bind NAD(+). A substrate-binding site is contributed by Lys-153. The active-site Proton acceptor is the Lys-248. NAD(+) contacts are provided by Arg-312 and Gln-341. Residue 312–313 (RN) participates in substrate binding.

The protein belongs to the NAD-dependent glycerol-3-phosphate dehydrogenase family. Homodimer.

The protein localises to the cytoplasm. The catalysed reaction is sn-glycerol 3-phosphate + NAD(+) = dihydroxyacetone phosphate + NADH + H(+). The protein is Probable glycerol-3-phosphate dehydrogenase 2 (gpdh-2) of Caenorhabditis elegans.